A 141-amino-acid chain; its full sequence is Nucleoside diphosphate kinase (141 aa).

The ATP site is built by lysine 11, phenylalanine 59, arginine 87, threonine 93, arginine 104, and asparagine 114. The active-site Pros-phosphohistidine intermediate is histidine 117.

This sequence belongs to the NDK family. In terms of assembly, homotetramer. Mg(2+) is required as a cofactor.

It is found in the cytoplasm. The enzyme catalyses a 2'-deoxyribonucleoside 5'-diphosphate + ATP = a 2'-deoxyribonucleoside 5'-triphosphate + ADP. It carries out the reaction a ribonucleoside 5'-diphosphate + ATP = a ribonucleoside 5'-triphosphate + ADP. Its function is as follows. Major role in the synthesis of nucleoside triphosphates other than ATP. The ATP gamma phosphate is transferred to the NDP beta phosphate via a ping-pong mechanism, using a phosphorylated active-site intermediate. In Acidithiobacillus ferrooxidans (strain ATCC 53993 / BNL-5-31) (Leptospirillum ferrooxidans (ATCC 53993)), this protein is Nucleoside diphosphate kinase.